The sequence spans 177 residues: Protein C2-DOMAIN ABA-RELATED 4 (177 aa).

A C2 domain is found at 4–118; it reads ACPARTSSLM…LRMQLDGLPS (115 aa). Ca(2+) contacts are provided by R33, D34, D39, D85, H86, D87, and D93.

Belongs to the plant CAR protein family. As to quaternary structure, dimers and oligomers. Binds to PYR/PYL/RCAR abscisic acid intracellular receptors in an ABA-independent manner, both at the plasma membrane and in the nucleus. Interacts directly with PYR1, PYL1, PYL4, PYL6 and PYL8. Binds phospholipids in a Ca(2+)-dependent manner. Interacts with YchF1. Requires Ca(2+) as cofactor.

Its subcellular location is the cell membrane. The protein localises to the nucleus. It localises to the cytoplasm. It is found in the cytosol. Functionally, mediates the transient calcium-dependent interaction of PYR/PYL/RCAR abscisic acid (ABA) receptors with the plasma membrane and thus regulates ABA sensitivity. Stimulates the GTPase/ATPase activities of YchF1, and regulates its subcellular localization. Promotes tolerance towards salinity stress by limiting the accumulation of reactive oxygen species (ROS). Promotes resistance to bacterial pathogens (e.g. Xanthomonas oryzae pv. oryzae and P.syringae pv. tomato DC3000). Binds liposomes in the absence of exogenous Ca(2+), but this activity is enhanced in the presence of Ca(2+) and generates membrane curvature. The polypeptide is Protein C2-DOMAIN ABA-RELATED 4 (Arabidopsis thaliana (Mouse-ear cress)).